The primary structure comprises 193 residues: Rho-related protein racF2 (193 aa).

Position 10–17 (Gly10–Thr17) interacts with GTP. The short motif at Tyr32 to Tyr40 is the Effector region element. GTP is bound by residues Asp57–Gln61 and Thr115–Asp118. Cys190 bears the Cysteine methyl ester mark. Cys190 is lipidated: S-geranylgeranyl cysteine. Residues Thr191 to Met193 constitute a propeptide, removed in mature form.

It belongs to the small GTPase superfamily. Rho family.

The protein resides in the cell membrane. The protein is Rho-related protein racF2 (racF2) of Dictyostelium discoideum (Social amoeba).